The sequence spans 318 residues: Inactive dihydropteroate synthase 2 (318 aa).

Residues 1–25 are disordered; that stretch reads MRSTPPASAGRSTPPALAGHSTPPA. The 258-residue stretch at 42–299 folds into the Pterin-binding domain; the sequence is ALIMAIVNRT…EVAATRRVLE (258 aa).

This sequence belongs to the DHPS family. In terms of assembly, homodimer.

In terms of biological role, has very low affinity for the DHPS substrate 6-hydroxymethyl-7,8-dihydropterin-pyrophosphate, but can bind the inhibitor dapsone. Seems to lack dihydropteroate synthase activity, and does probably not function in folate metabolism. This is Inactive dihydropteroate synthase 2 (folP2) from Mycobacterium bovis (strain ATCC BAA-935 / AF2122/97).